The chain runs to 147 residues: Large ribosomal subunit protein uL16 (147 aa).

Belongs to the universal ribosomal protein uL16 family. Part of the 50S ribosomal subunit.

Its function is as follows. Binds 23S rRNA and is also seen to make contacts with the A and possibly P site tRNAs. This chain is Large ribosomal subunit protein uL16, found in Caldicellulosiruptor saccharolyticus (strain ATCC 43494 / DSM 8903 / Tp8T 6331).